Here is a 953-residue protein sequence, read N- to C-terminus: Translation initiation factor IF-2 (953 aa).

Disordered stretches follow at residues 48-240 (SSFS…AQQE) and 279-363 (TKLK…TERK). Basic and acidic residues-rich tracts occupy residues 80–89 (TGSEHVEKTQ), 98–111 (FKAE…EQAA), and 140–188 (QGDK…ENHK). Residues 191 to 207 (RFTNQKKQGRQEPQSKS) show a composition bias toward polar residues. Positions 229 to 240 (RQSETRFRAQQE) are enriched in basic and acidic residues. The span at 282–291 (KSSNISAKST) shows a compositional bias: polar residues. The span at 300–317 (ARPEKNRELTHHSQEGQK) shows a compositional bias: basic and acidic residues. Residues 322–338 (SWNSQNQVRNQKNSNWN) are compositionally biased toward low complexity. Over residues 339–348 (KNKKTKKGKN) the composition is skewed to basic residues. Residues 454-623 (ERAPVVTIMG…LLVAEVEELK (170 aa)) enclose the tr-type G domain. The interval 463–470 (GHVDHGKT) is G1. 463-470 (GHVDHGKT) lines the GTP pocket. Residues 488 to 492 (GITQH) are G2. The interval 509-512 (DTPG) is G3. GTP contacts are provided by residues 509–513 (DTPGH) and 563–566 (NKID). The tract at residues 563–566 (NKID) is G4. The tract at residues 599–601 (SAK) is G5.

Belongs to the TRAFAC class translation factor GTPase superfamily. Classic translation factor GTPase family. IF-2 subfamily.

It is found in the cytoplasm. In terms of biological role, one of the essential components for the initiation of protein synthesis. Protects formylmethionyl-tRNA from spontaneous hydrolysis and promotes its binding to the 30S ribosomal subunits. Also involved in the hydrolysis of GTP during the formation of the 70S ribosomal complex. The protein is Translation initiation factor IF-2 of Streptococcus pyogenes serotype M1.